The primary structure comprises 101 residues: Carboxysome shell vertex protein CcmL (101 aa).

A BMV domain is found at 1–84; the sequence is MQIAKVRGTV…VDAAVVAIID (84 aa).

Belongs to the CcmL/EutN family. CcmL subfamily. In terms of assembly, homopentamer. Interacts with full-length CcmM.

The protein resides in the carboxysome. Its function is as follows. Probably forms vertices in the carboxysome, a polyhedral inclusion where RuBisCO (ribulose bisphosphate carboxylase, rbcL-rbcS) is sequestered. Has been modeled to induce curvature upon insertion into an otherwise flat hexagonal molecular layer of CcmK subunits. The polypeptide is Carboxysome shell vertex protein CcmL (Nostoc sp. (strain PCC 7120 / SAG 25.82 / UTEX 2576)).